Consider the following 363-residue polypeptide: Peptide chain release factor 2 (363 aa).

Q251 carries the N5-methylglutamine modification.

This sequence belongs to the prokaryotic/mitochondrial release factor family. In terms of processing, methylated by PrmC. Methylation increases the termination efficiency of RF2.

Its subcellular location is the cytoplasm. Peptide chain release factor 2 directs the termination of translation in response to the peptide chain termination codons UGA and UAA. This Helicobacter pylori (strain Shi470) protein is Peptide chain release factor 2.